Here is a 132-residue protein sequence, read N- to C-terminus: Nucleoid-associated protein EspR (132 aa).

Positions Ile-38 to Ser-50 form a DNA-binding region, H-T-H motif.

As to quaternary structure, homodimer. Binds DNA as a dimer of dimers.

It localises to the cytoplasm. The protein localises to the nucleoid. Its function is as follows. Virulence regulator that has both architectural and regulatory roles. Impacts cell wall functions and pathogenesis through regulation of multiple genes. The polypeptide is Nucleoid-associated protein EspR (Mycobacterium tuberculosis (strain CDC 1551 / Oshkosh)).